Here is a 479-residue protein sequence, read N- to C-terminus: Glutamate--tRNA ligase (479 aa).

Positions 9–19 (PSPTGLFHIGT) match the 'HIGH' region motif. The 'KMSKS' region signature appears at 248–252 (KLSKR). Lys251 contributes to the ATP binding site.

It belongs to the class-I aminoacyl-tRNA synthetase family. Glutamate--tRNA ligase type 1 subfamily. As to quaternary structure, monomer.

Its subcellular location is the cytoplasm. The enzyme catalyses tRNA(Glu) + L-glutamate + ATP = L-glutamyl-tRNA(Glu) + AMP + diphosphate. In terms of biological role, catalyzes the attachment of glutamate to tRNA(Glu) in a two-step reaction: glutamate is first activated by ATP to form Glu-AMP and then transferred to the acceptor end of tRNA(Glu). The protein is Glutamate--tRNA ligase of Prochlorococcus marinus (strain MIT 9312).